The chain runs to 339 residues: Phenylalanine--tRNA ligase alpha subunit (339 aa).

Residue Glu-253 coordinates Mg(2+).

It belongs to the class-II aminoacyl-tRNA synthetase family. Phe-tRNA synthetase alpha subunit type 1 subfamily. Tetramer of two alpha and two beta subunits. Mg(2+) serves as cofactor.

The protein localises to the cytoplasm. The catalysed reaction is tRNA(Phe) + L-phenylalanine + ATP = L-phenylalanyl-tRNA(Phe) + AMP + diphosphate + H(+). The polypeptide is Phenylalanine--tRNA ligase alpha subunit (Alcanivorax borkumensis (strain ATCC 700651 / DSM 11573 / NCIMB 13689 / SK2)).